A 101-amino-acid polypeptide reads, in one-letter code: Citrate lyase acyl carrier protein (101 aa).

Serine 14 is modified (O-(phosphoribosyl dephospho-coenzyme A)serine).

Belongs to the CitD family. Oligomer with a subunit composition of (alpha,beta,gamma)6.

It localises to the cytoplasm. Its function is as follows. Covalent carrier of the coenzyme of citrate lyase. This is Citrate lyase acyl carrier protein from Lacticaseibacillus casei (strain BL23) (Lactobacillus casei).